A 71-amino-acid chain; its full sequence is Large ribosomal subunit protein bL31 (71 aa).

Cys-16, Cys-18, Cys-37, and Cys-40 together coordinate Zn(2+).

Belongs to the bacterial ribosomal protein bL31 family. Type A subfamily. As to quaternary structure, part of the 50S ribosomal subunit. Requires Zn(2+) as cofactor.

Its function is as follows. Binds the 23S rRNA. This is Large ribosomal subunit protein bL31 from Chromohalobacter salexigens (strain ATCC BAA-138 / DSM 3043 / CIP 106854 / NCIMB 13768 / 1H11).